Consider the following 206-residue polypeptide: HTH-type transcriptional regulator Hpr (206 aa).

Positions A13 to G157 constitute an HTH marR-type domain. Positions I63–E86 form a DNA-binding region, H-T-H motif. The tract at residues S177 to N206 is disordered. The span at E178–N206 shows a compositional bias: basic and acidic residues.

In terms of assembly, homodimer.

Negative regulator of protease production and sporulation. This is HTH-type transcriptional regulator Hpr from Bacillus licheniformis (strain ATCC 14580 / DSM 13 / JCM 2505 / CCUG 7422 / NBRC 12200 / NCIMB 9375 / NCTC 10341 / NRRL NRS-1264 / Gibson 46).